The primary structure comprises 1424 residues: DNA-directed RNA polymerase subunit beta' (1424 aa).

4 residues coordinate Zn(2+): Cys-60, Cys-62, Cys-75, and Cys-78. Mg(2+)-binding residues include Asp-449, Asp-451, and Asp-453. Zn(2+) is bound by residues Cys-783, Cys-857, Cys-864, and Cys-867.

This sequence belongs to the RNA polymerase beta' chain family. The RNAP catalytic core consists of 2 alpha, 1 beta, 1 beta' and 1 omega subunit. When a sigma factor is associated with the core the holoenzyme is formed, which can initiate transcription. Mg(2+) serves as cofactor. Zn(2+) is required as a cofactor.

It carries out the reaction RNA(n) + a ribonucleoside 5'-triphosphate = RNA(n+1) + diphosphate. DNA-dependent RNA polymerase catalyzes the transcription of DNA into RNA using the four ribonucleoside triphosphates as substrates. This chain is DNA-directed RNA polymerase subunit beta', found in Treponema denticola (strain ATCC 35405 / DSM 14222 / CIP 103919 / JCM 8153 / KCTC 15104).